We begin with the raw amino-acid sequence, 673 residues long: Poly(glycerol-phosphate) alpha-glucosyltransferase (673 aa).

Ser-2 is modified (phosphoserine).

The protein belongs to the glycosyltransferase group 1 family. Glycosyltransferase 4 subfamily.

The protein resides in the cytoplasm. The catalysed reaction is 4-O-{[(2R)-1-glycerylphospho](n)-(2R)-1-glycerylphospho}-N-acetyl-beta-D-mannosaminyl-(1-&gt;4)-N-acetyl-alpha-D-glucosaminyl undecaprenyl diphosphate + n UDP-alpha-D-glucose = 4-O-{[(2R)-2-alpha-D-glucosyl-1-glycerylphospho](n)-(2R)-1-glycerylphospho}-N-acetyl-beta-D-mannosaminyl-(1-&gt;4)-N-acetyl-alpha-D-glucosaminyl undecaprenyl diphosphate + n UDP + n H(+). It functions in the pathway cell wall biogenesis; poly(glycerol phosphate) teichoic acid biosynthesis. Its function is as follows. Catalyzes the addition of glucose to the C-2 hydroxy group of the glycerol units in teichoic acid. The sequence is that of Poly(glycerol-phosphate) alpha-glucosyltransferase (tagE) from Bacillus subtilis (strain 168).